Reading from the N-terminus, the 341-residue chain is Solute carrier family 25 member 43 (341 aa).

3 Solcar repeats span residues 11–101, 105–185, and 200–298; these read TGGQ…TDDL, SQWS…LLVY, and SLPQ…LYQN. 6 helical membrane-spanning segments follow: residues 16–36, 68–88, 110–130, 166–186, 205–225, and 262–282; these read LLCA…LELA, LWKG…VQLA, IMAG…TDLI, GVSL…LVYM, FANV…FETV, and VLGL…YFGI.

Belongs to the mitochondrial carrier (TC 2.A.29) family.

The protein localises to the mitochondrion inner membrane. The sequence is that of Solute carrier family 25 member 43 (SLC25A43) from Homo sapiens (Human).